Here is a 34-residue protein sequence, read N- to C-terminus: Cytochrome c oxidase subunit 6B (34 aa).

Belongs to the cytochrome c oxidase subunit 6B family. As to quaternary structure, component of the cytochrome c oxidase (complex IV, CIV), a multisubunit enzyme composed of 14 subunits. The complex is composed of a catalytic core of 3 subunits MT-CO1, MT-CO2 and MT-CO3, encoded in the mitochondrial DNA, and 11 supernumerary subunits COX4I, COX5A, COX5B, COX6A, COX6B, COX6C, COX7A, COX7B, COX7C, COX8 and NDUFA4, which are encoded in the nuclear genome. The complex exists as a monomer or a dimer and forms supercomplexes (SCs) in the inner mitochondrial membrane with NADH-ubiquinone oxidoreductase (complex I, CI) and ubiquinol-cytochrome c oxidoreductase (cytochrome b-c1 complex, complex III, CIII), resulting in different assemblies (supercomplex SCI(1)III(2)IV(1) and megacomplex MCI(2)III(2)IV(2)). Post-translationally, the N-terminus is blocked.

It is found in the mitochondrion inner membrane. The protein operates within energy metabolism; oxidative phosphorylation. In terms of biological role, component of the cytochrome c oxidase, the last enzyme in the mitochondrial electron transport chain which drives oxidative phosphorylation. The respiratory chain contains 3 multisubunit complexes succinate dehydrogenase (complex II, CII), ubiquinol-cytochrome c oxidoreductase (cytochrome b-c1 complex, complex III, CIII) and cytochrome c oxidase (complex IV, CIV), that cooperate to transfer electrons derived from NADH and succinate to molecular oxygen, creating an electrochemical gradient over the inner membrane that drives transmembrane transport and the ATP synthase. Cytochrome c oxidase is the component of the respiratory chain that catalyzes the reduction of oxygen to water. Electrons originating from reduced cytochrome c in the intermembrane space (IMS) are transferred via the dinuclear copper A center (CU(A)) of subunit 2 and heme A of subunit 1 to the active site in subunit 1, a binuclear center (BNC) formed by heme A3 and copper B (CU(B)). The BNC reduces molecular oxygen to 2 water molecules using 4 electrons from cytochrome c in the IMS and 4 protons from the mitochondrial matrix. In Thunnus obesus (Bigeye tuna), this protein is Cytochrome c oxidase subunit 6B.